We begin with the raw amino-acid sequence, 437 residues long: Adenylosuccinate synthetase, organellar chromatophore (437 aa).

GTP contacts are provided by residues 12–18 (GDEGKGK) and 40–42 (GHT). The Proton acceptor role is filled by Asp13. Residues Asp13 and Gly40 each contribute to the Mg(2+) site. IMP contacts are provided by residues 13-16 (DEGK), 38-41 (NAGH), Thr128, Arg142, Gln223, Thr238, and Arg302. Catalysis depends on His41, which acts as the Proton donor. 298 to 304 (TTTGRRR) is a substrate binding site. GTP is bound by residues Arg304 and 330-332 (KLD).

This sequence belongs to the adenylosuccinate synthetase family. Homodimer. Mg(2+) serves as cofactor.

The protein resides in the plastid. The protein localises to the organellar chromatophore. The enzyme catalyses IMP + L-aspartate + GTP = N(6)-(1,2-dicarboxyethyl)-AMP + GDP + phosphate + 2 H(+). It participates in purine metabolism; AMP biosynthesis via de novo pathway; AMP from IMP: step 1/2. In terms of biological role, plays an important role in the de novo pathway and in the salvage pathway of purine nucleotide biosynthesis. Catalyzes the first committed step in the biosynthesis of AMP from IMP. The polypeptide is Adenylosuccinate synthetase, organellar chromatophore (Paulinella chromatophora).